The chain runs to 116 residues: Somatostatin (116 aa).

An N-terminal signal peptide occupies residues 1–24; the sequence is MLSCRLQCALAALSIVLALGCVTG. Residues 25–88 constitute a propeptide that is removed on maturation; the sequence is APSDPRLRQF…QDEMRLELQR (64 aa). A43 carries the post-translational modification Alanine amide. A disordered region spans residues 62-82; it reads QTENDALEPEDLSQAAEQDEM. Cysteines 105 and 116 form a disulfide.

It belongs to the somatostatin family. C-terminal amidation of the neuronostatin peptide is required for its biological activity, including for the regulation of mean arterial pressure.

It is found in the secreted. In terms of biological role, inhibits the secretion of pituitary hormones, including that of growth hormone/somatotropin (GH1), PRL, ACTH, luteinizing hormone (LH) and TSH. Also impairs ghrelin- and GnRH-stimulated secretion of GH1 and LH; the inhibition of ghrelin-stimulated secretion of GH1 can be further increased by neuronostatin. Functionally, may enhance low-glucose-induced glucagon release by pancreatic alpha cells. This effect may be mediated by binding to GPR107 and PKA activation. May regulate cardiac contractile function. May compromise cardiomyocyte viability. In the central nervous system, may impair memory retention and may affect hippocampal excitability. May also have anxiolytic and anorexigenic effects. May play a role in arterial pressure regulation. May inhibit basal, but not ghrelin- or GnRH-stimulated secretion of GH1 or LH, but does not affect the release of other pituitary hormones, including PRL, ACTH, FSH or TSH. Potentiates inhibitory action of somatostatin on ghrelin-stimulated secretion of GH1, but not that on GnRH-stimulated secretion of LH. This Homo sapiens (Human) protein is Somatostatin (SST).